A 3410-amino-acid polypeptide reads, in one-letter code: Genome polyprotein (3410 aa).

Topologically, residues 1–103 (MTKKPGRPGR…DFVHLPKKKS (103 aa)) are cytoplasmic. Residues 2-15 (TKKPGRPGRNRAVN) form an interaction with host EXOC1 region. Residues 38-73 (LLDGRGPLRMVLAILAFFRFTALKPTAGLLKRWGMM) form a hydrophobic; homodimerization of capsid protein C region. Positions 103–119 (SGVSIIGRMLVFSFTAA) are cleaved as a propeptide — ER anchor for the capsid protein C, removed in mature form by serine protease NS3. A helical membrane pass occupies residues 104–124 (GVSIIGRMLVFSFTAAVRVTL). Residues 125-245 (ENGMSLMKIQ…ATSYLTKAES (121 aa)) lie on the Extracellular side of the membrane. A helical transmembrane segment spans residues 246-266 (WALRNPGYALVAAVLGWSLGT). Residues 267–271 (SNAQK) are Cytoplasmic-facing. Residues 272 to 286 (VIFTVMILLIAPAYS) form a helical membrane-spanning segment. The Extracellular segment spans residues 287–739 (IRCVGVENRD…QIFGGMFRTL (453 aa)). 6 cysteine pairs are disulfide-bonded: Cys-289–Cys-316, Cys-346–Cys-402, Cys-346–Cys-407, Cys-360–Cys-391, Cys-378–Cys-402, and Cys-378–Cys-407. Positions 384–397 (DRGWGNGCGLFGKG) are fusion peptide. An N-linked (GlcNAc...) asparagine; by host glycan is attached at Asn-440. 2 disulfide bridges follow: Cys-476-Cys-574 and Cys-591-Cys-622. Residues 740–760 (FGGMSWFTQIMIGALCCWLGI) traverse the membrane as a helical segment. The Cytoplasmic segment spans residues 761–766 (NARDRT). The chain crosses the membrane as a helical span at residues 767 to 787 (IAVTFLAVGGVLVFLATSVNA). At 788-1165 (DSGCALDLKR…IALQEVMRKR (378 aa)) the chain is on the extracellular side. 8 disulfides stabilise this stretch: Cys-791–Cys-802, Cys-842–Cys-928, Cys-964–Cys-1009, Cys-1066–Cys-1115, Cys-1077–Cys-1098, Cys-1077–Cys-1099, Cys-1098–Cys-1102, and Cys-1099–Cys-1102. A glycan (N-linked (GlcNAc...) asparagine; by host) is linked at Asn-915. A helical membrane pass occupies residues 1166 to 1186 (ILGRHITWMVIAVFMAMILGG). Residues 1187–1214 (LSYRDLGRYLVLVGAAFAERNSGGDLLH) lie on the Cytoplasmic side of the membrane. The chain crosses the membrane as a helical span at residues 1215–1235 (LVLVATFKVKPMALLGFVLGG). The Lumenal portion of the chain corresponds to 1236–1242 (RWCRRQS). The chain crosses the membrane as a helical span at residues 1243 to 1263 (LLLSIGAVLVNFALEFQGGYF). Residues 1264 to 1284 (ELVDSLALALLFVKAVVQTDT) lie on the Cytoplasmic side of the membrane. Residues 1285–1305 (TSVSLPLLAALAPAGCYTVLG) form a helical membrane-spanning segment. At 1306 to 1335 (THRFIMLTLVLVTFLGCKKTASVKKAGTAA) the chain is on the lumenal side. Residues 1336–1356 (VGVVLGMVGMKTIPMLGMLMV) form a helical membrane-spanning segment. The Cytoplasmic segment spans residues 1357-1363 (TSRARRS). Residues 1364–1384 (WPLHEAMAAVGILCALFGALA) form a helical membrane-spanning segment. The Lumenal portion of the chain corresponds to 1385–1387 (ETE). A helical transmembrane segment spans residues 1388-1408 (VDLAGPLAAAGLIVMAYVISG). The Cytoplasmic portion of the chain corresponds to 1409 to 1464 (RSNDLSIKKVEDVKWSDEAEVTGESVSYHVSLDVRGDPTLTEDSGPGLEKVLLKVG). The interacts with and activates NS3 protease stretch occupies residues 1415 to 1454 (IKKVEDVKWSDEAEVTGESVSYHVSLDVRGDPTLTEDSGP). Positions 1465-1485 (LMAISGIYPVAIPFALGAWFF) form an intramembrane region, helical. The Cytoplasmic segment spans residues 1486–2158 (LEKRCKRAGA…KAALENSPEM (673 aa)). The region spanning 1493–1670 (AGALWDIPSP…ENVGQEDGAE (178 aa)) is the Peptidase S7 domain. Active-site charge relay system; for serine protease NS3 activity residues include His-1543, Asp-1567, and Ser-1627. In terms of domain architecture, Helicase ATP-binding spans 1673-1829 (DNWFRKRELT…PSNSPIIDEE (157 aa)). An important for RNA-binding region spans residues 1677–1680 (RKRE). An ATP-binding site is contributed by 1686 to 1693 (LHPGAGKT). Positions 1777 to 1780 (DEAH) match the DEAH box motif. The 168-residue stretch at 1839 to 2006 (SGYEWIIEFD…QLYTPEREKT (168 aa)) folds into the Helicase C-terminal domain. Lys-1881 is subject to N6-acetyllysine; by host. The segment at 2153–2157 (ENSPE) is regulates the ATPase activity of NS3 helicase. Residues 2159–2179 (IETFLLCALVCLMTIGLVVVL) form a helical membrane-spanning segment. Residues 2180-2185 (VRGKGP) are Lumenal-facing. The helical intramembrane region spans 2186–2205 (GKLAFGMVSIGVMTWLLWSA). A topological domain (lumenal) is located at residue Gly-2206. A helical membrane pass occupies residues 2207–2227 (VDPGKIAAAVILVFLLLVVLI). Residues 2228–2242 (PEPEKQRSVQDNQLA) lie on the Cytoplasmic side of the membrane. A helical membrane pass occupies residues 2243 to 2257 (MLMLLIATILGGVAA). Residues 2258 to 2293 (NEMGWLEKTKADLSWVVRGRSSTTTPVVELDMKPAT) lie on the Lumenal side of the membrane. The helical intramembrane region spans 2294 to 2314 (AWTLYALATTLLTPLFQHLIV). Residues 2315–2336 (TKYANISLMAIASQAGTLFSMD) lie on the Lumenal side of the membrane. The chain crosses the membrane as a helical span at residues 2337-2357 (SGIPFSSIELSVPLLALGCWT). Residue Gln-2358 is a topological domain, cytoplasmic. A helical transmembrane segment spans residues 2359–2379 (ITPCSLILACVLLSTHYAILL). At 2380–2420 (PGMQAQAARDAQRRTAAGIMKNAVVDGIVATDIPPLDGAGP) the chain is on the lumenal side. The chain crosses the membrane as a helical span at residues 2421 to 2441 (LTEKKLGQLLLFAAAVTGVVI). Over 2442–3410 (TRSPRSWSEL…EKRVEFRGVL (969 aa)) the chain is Cytoplasmic. In terms of domain architecture, mRNA cap 0-1 NS5-type MT spans 2508–2773 (GGGIGETLGE…DVNLSCGTRA (266 aa)). Ser-2563 lines the S-adenosyl-L-methionine pocket. A Phosphoserine modification is found at Ser-2563. Lys-2568 (for 2'-O-MTase activity) is an active-site residue. Positions 2593, 2594, 2611, 2612, 2638, and 2639 each coordinate S-adenosyl-L-methionine. Asp-2653 functions as the For 2'-O-MTase activity in the catalytic mechanism. Residue Ile-2654 participates in S-adenosyl-L-methionine binding. Residues Lys-2690 and Glu-2726 each act as for 2'-O-MTase activity in the active site. Tyr-2728 is a binding site for S-adenosyl-L-methionine. Residues Glu-2947, His-2951, Cys-2956, and Cys-2959 each contribute to the Zn(2+) site. The 152-residue stretch at 3036 to 3187 (GILYADDTAG…AAPDARFGAA (152 aa)) folds into the RdRp catalytic domain. The Zn(2+) site is built by His-3222, Cys-3238, and Cys-3356.

The protein in the N-terminal section; belongs to the class I-like SAM-binding methyltransferase superfamily. mRNA cap 0-1 NS5-type methyltransferase family. In terms of assembly, homodimer. Interacts (via N-terminus) with host EXOC1 (via C-terminus); this interaction results in EXOC1 degradation through the proteasome degradation pathway. As to quaternary structure, forms heterodimers with envelope protein E in the endoplasmic reticulum and Golgi. Homodimer; in the endoplasmic reticulum and Golgi. Interacts with protein prM. Interacts with non-structural protein 1. In terms of assembly, homodimer; Homohexamer when secreted. Interacts with envelope protein E. NS1 interacts with NS4B. Interacts with host complement protein CFH; this interaction leads to the degradation of C3. As to quaternary structure, interacts (via N-terminus) with serine protease NS3. Forms a heterodimer with serine protease NS3. May form homooligomers. In terms of assembly, forms a heterodimer with NS2B. Interacts with non-structural protein 2A (via N-terminus). Interacts with NS4B. Interacts with unphosphorylated RNA-directed RNA polymerase NS5; this interaction stimulates RNA-directed RNA polymerase NS5 guanylyltransferase activity. As to quaternary structure, interacts with serine protease NS3. Homodimer. Interacts with host STAT2; this interaction inhibits the phosphorylation of the latter, and, when all viral proteins are present (polyprotein), targets STAT2 for degradation. Specific enzymatic cleavages in vivo yield mature proteins. Cleavages in the lumen of endoplasmic reticulum are performed by host signal peptidase, whereas cleavages in the cytoplasmic side are performed by serine protease NS3. Signal cleavage at the 2K-4B site requires a prior NS3 protease-mediated cleavage at the 4A-2K site. Post-translationally, cleaved in post-Golgi vesicles by a host furin, releasing the mature small envelope protein M, and peptide pr. This cleavage is incomplete as up to 30% of viral particles still carry uncleaved prM. In terms of processing, N-glycosylated. N-glycosylated. The excreted form is glycosylated and this is required for efficient secretion of the protein from infected cells. Post-translationally, acetylated by host KAT5. Acetylation modulates NS3 RNA-binding and unwinding activities and plays an important positive role for viral replication. In terms of processing, phosphorylated on serines residues. This phosphorylation may trigger NS5 nuclear localization.

It localises to the virion. It is found in the host nucleus. The protein resides in the host cytoplasm. Its subcellular location is the host perinuclear region. The protein localises to the secreted. It localises to the virion membrane. It is found in the host endoplasmic reticulum membrane. It catalyses the reaction Selective hydrolysis of -Xaa-Xaa-|-Yaa- bonds in which each of the Xaa can be either Arg or Lys and Yaa can be either Ser or Ala.. The enzyme catalyses RNA(n) + a ribonucleoside 5'-triphosphate = RNA(n+1) + diphosphate. The catalysed reaction is a ribonucleoside 5'-triphosphate + H2O = a ribonucleoside 5'-diphosphate + phosphate + H(+). It carries out the reaction ATP + H2O = ADP + phosphate + H(+). It catalyses the reaction a 5'-end (5'-triphosphoguanosine)-ribonucleoside in mRNA + S-adenosyl-L-methionine = a 5'-end (N(7)-methyl 5'-triphosphoguanosine)-ribonucleoside in mRNA + S-adenosyl-L-homocysteine. The enzyme catalyses a 5'-end (N(7)-methyl 5'-triphosphoguanosine)-ribonucleoside in mRNA + S-adenosyl-L-methionine = a 5'-end (N(7)-methyl 5'-triphosphoguanosine)-(2'-O-methyl-ribonucleoside) in mRNA + S-adenosyl-L-homocysteine + H(+). In terms of biological role, plays a role in virus budding by binding to the cell membrane and gathering the viral RNA into a nucleocapsid that forms the core of a mature virus particle. During virus entry, may induce genome penetration into the host cytoplasm after hemifusion induced by the surface proteins. Can migrate to the cell nucleus where it modulates host functions. Overcomes the anti-viral effects of host EXOC1 by sequestering and degrading the latter through the proteasome degradation pathway. Functionally, inhibits RNA silencing by interfering with host Dicer. Prevents premature fusion activity of envelope proteins in trans-Golgi by binding to envelope protein E at pH6.0. After virion release in extracellular space, gets dissociated from E dimers. Its function is as follows. Acts as a chaperone for envelope protein E during intracellular virion assembly by masking and inactivating envelope protein E fusion peptide. prM is the only viral peptide matured by host furin in the trans-Golgi network probably to avoid catastrophic activation of the viral fusion activity in acidic Golgi compartment prior to virion release. prM-E cleavage is inefficient, and many virions are only partially matured. These uncleaved prM would play a role in immune evasion. In terms of biological role, may play a role in virus budding. Exerts cytotoxic effects by activating a mitochondrial apoptotic pathway through M ectodomain. May display a viroporin activity. Functionally, binds to host cell surface receptor and mediates fusion between viral and cellular membranes. Envelope protein is synthesized in the endoplasmic reticulum in the form of heterodimer with protein prM. They play a role in virion budding in the ER, and the newly formed immature particle is covered with 60 spikes composed of heterodimer between precursor prM and envelope protein E. The virion is transported to the Golgi apparatus where the low pH causes dissociation of PrM-E heterodimers and formation of E homodimers. prM-E cleavage is inefficient, and many virions are only partially matured. These uncleaved prM would play a role in immune evasion. Involved in immune evasion, pathogenesis and viral replication. Once cleaved off the polyprotein, is targeted to three destinations: the viral replication cycle, the plasma membrane and the extracellular compartment. Essential for viral replication. Required for formation of the replication complex and recruitment of other non-structural proteins to the ER-derived membrane structures. Excreted as a hexameric lipoparticle that plays a role against host immune response. Antagonizing the complement function. Binds to the host macrophages and dendritic cells. Inhibits signal transduction originating from Toll-like receptor 3 (TLR3). Its function is as follows. Component of the viral RNA replication complex that functions in virion assembly and antagonizes the host alpha/beta interferon antiviral response. In terms of biological role, required cofactor for the serine protease function of NS3. May have membrane-destabilizing activity and form viroporins. Functionally, displays three enzymatic activities: serine protease, NTPase and RNA helicase. NS3 serine protease, in association with NS2B, performs its autocleavage and cleaves the polyprotein at dibasic sites in the cytoplasm: C-prM, NS2A-NS2B, NS2B-NS3, NS3-NS4A, NS4A-2K and NS4B-NS5. NS3 RNA helicase binds RNA and unwinds dsRNA in the 3' to 5' direction. Regulates the ATPase activity of the NS3 helicase activity. NS4A allows NS3 helicase to conserve energy during unwinding. Its function is as follows. Functions as a signal peptide for NS4B and is required for the interferon antagonism activity of the latter. In terms of biological role, induces the formation of ER-derived membrane vesicles where the viral replication takes place. Inhibits interferon (IFN)-induced host STAT1 phosphorylation and nuclear translocation, thereby preventing the establishment of cellular antiviral state by blocking the IFN-alpha/beta pathway. Inhibits STAT2 translocation in the nucleus after IFN-alpha treatment. Functionally, replicates the viral (+) and (-) RNA genome, and performs the capping of genomes in the cytoplasm. NS5 methylates viral RNA cap at guanine N-7 and ribose 2'-O positions. Besides its role in RNA genome replication, also prevents the establishment of cellular antiviral state by blocking the interferon-alpha/beta (IFN-alpha/beta) signaling pathway. Inhibits host TYK2 and STAT2 phosphorylation, thereby preventing activation of JAK-STAT signaling pathway. The sequence is that of Genome polyprotein from Kokobera virus (KOKV).